The chain runs to 529 residues: Hyaluronidase PH-20 (529 aa).

The first 35 residues, 1–35 (MGAFTFKHSFFGSFVECSGVLQTVFIFLLIPCCLA), serve as a signal peptide directing secretion. Intrachain disulfides connect Cys-59-Cys-351 and Cys-223-Cys-237. A glycan (N-linked (GlcNAc...) asparagine) is linked at Asn-81. Glu-147 (proton donor) is an active-site residue. N-linked (GlcNAc...) asparagine glycans are attached at residues Asn-165 and Asn-179. Asn-253 and Asn-368 each carry an N-linked (GlcNAc...) asparagine glycan. Disulfide bonds link Cys-376/Cys-387, Cys-381/Cys-435, and Cys-437/Cys-464. An N-linked (GlcNAc...) asparagine glycan is attached at Asn-401. Residues 478–502 (DEPPITDDTSQNQDSISDITSSAPP) form a disordered region. Positions 487–502 (SQNQDSISDITSSAPP) are enriched in polar residues. The GPI-anchor amidated serine moiety is linked to residue Ser-492. A propeptide spans 493-529 (ISDITSSAPPSSHILPKDLSWCLFLLSIFSQHWKYLL) (removed in mature form).

It belongs to the glycosyl hydrolase 56 family. In terms of processing, endoproteolysis (toward the C-terminus producing two disulfide-linked fragments) could activate PH-20. Testis.

Its subcellular location is the cell membrane. It catalyses the reaction Random hydrolysis of (1-&gt;4)-linkages between N-acetyl-beta-D-glucosamine and D-glucuronate residues in hyaluronate.. Involved in sperm-egg adhesion. Upon fertilization sperm must first penetrate a layer of cumulus cells that surrounds the egg before reaching the zona pellucida. The cumulus cells are embedded in a matrix containing hyaluronic acid which is formed prior to ovulation. This protein aids in penetrating the layer of cumulus cells by digesting hyaluronic acid. The protein is Hyaluronidase PH-20 (SPAM1) of Cavia porcellus (Guinea pig).